We begin with the raw amino-acid sequence, 1161 residues long: BMP-2-inducible protein kinase (1161 aa).

The disordered stretch occupies residues 1 to 20; that stretch reads MKKFSRMPKSEGGSGGGAAG. S14 carries the post-translational modification Phosphoserine. One can recognise a Protein kinase domain in the interval 51–316; the sequence is VTLEESLAEG…DIFQVSYFAF (266 aa). ATP is bound by residues 57-65 and K79; that span reads LAEGGFSTV. D180 functions as the Proton acceptor in the catalytic mechanism. Disordered regions lie at residues 358 to 439, 453 to 495, 610 to 630, and 655 to 832; these read TDTI…RVLQ, LQHR…HHHL, TNQK…FGED, and ERAS…TQDL. Polar residues predominate over residues 361–394; that stretch reads IGPTETSIAPRQRPKANSATTATPSVLTIQSSAT. 2 stretches are compositionally biased toward low complexity: residues 422–439 and 460–485; these read LLGQ…RVLQ and QQQQ…QQQQ. A compositionally biased stretch (polar residues) spans 610–619; it reads TNQKNISNPP. S689 carries the post-translational modification Phosphoserine. Composition is skewed to polar residues over residues 697–718 and 726–735; these read SSIN…SPAS and KTSVQGQVQK. S742 carries the phosphoserine modification. Acidic residues predominate over residues 755 to 779; the sequence is EEEEQDDEEVLQGEQGDFNDDDTEP. Residues 798 to 813 are compositionally biased toward basic and acidic residues; it reads EKHSSDSDYEQAKAKY. A phosphoserine mark is found at S817 and S818. At T834 the chain carries Phosphothreonine. Residue S928 is modified to Phosphoserine. Residues 965 to 1035 are disordered; that stretch reads SQQQKVKQRS…RRDSQSSNEF (71 aa). Basic residues predominate over residues 970–984; the sequence is VKQRSLQKLSSRQRR. Positions 1000-1011 are enriched in low complexity; sequence TPTSTKKTLKPT. Residues S1029, S1031, S1032, S1039, S1041, S1076, S1107, and S1111 each carry the phosphoserine modification. Residues 1137–1146 show a composition bias toward polar residues; the sequence is TPHQSQQSQP. The interval 1137–1161 is disordered; that stretch reads TPHQSQQSQPVELDPFGAAPFPSKQ.

Belongs to the protein kinase superfamily. Ser/Thr protein kinase family. Post-translationally, autophosphorylated.

Its subcellular location is the nucleus. It catalyses the reaction L-seryl-[protein] + ATP = O-phospho-L-seryl-[protein] + ADP + H(+). The catalysed reaction is L-threonyl-[protein] + ATP = O-phospho-L-threonyl-[protein] + ADP + H(+). Its function is as follows. May be involved in osteoblast differentiation. The protein is BMP-2-inducible protein kinase (BMP2K) of Homo sapiens (Human).